The chain runs to 380 residues: Crotonobetainyl-CoA reductase (380 aa).

This sequence belongs to the acyl-CoA dehydrogenase family. In terms of assembly, homotetramer. It depends on FAD as a cofactor.

The protein localises to the cytoplasm. The catalysed reaction is 4-(trimethylamino)butanoyl-CoA + oxidized [electron-transfer flavoprotein] + H(+) = crotonobetainyl-CoA + reduced [electron-transfer flavoprotein]. It participates in amine and polyamine metabolism; carnitine metabolism. Catalyzes the reduction of crotonobetainyl-CoA to gamma-butyrobetainyl-CoA. This chain is Crotonobetainyl-CoA reductase, found in Salmonella typhi.